Here is a 942-residue protein sequence, read N- to C-terminus: Endoprotease bli-4 (942 aa).

The first 22 residues, 1 to 22 (MRISIGRIAWQILAVLIAVAFT), serve as a signal peptide directing secretion. Residues 23-116 (IEHDSICDES…EQRPKKRVKR (94 aa)) constitute a propeptide that is removed on maturation. The Lumenal segment spans residues 117–871 (DYILLDNDVH…TLLIDSNKSS (755 aa)). Ca(2+) is bound at residue aspartate 124. Residues 130 to 160 (PFRRSVLNRDGTRRAQRQQPQSPREIPSLPF) are disordered. One can recognise a Peptidase S8 domain in the interval 168 to 483 (QWYLHGGAVG…YGLIDGGALV (316 aa)). N-linked (GlcNAc...) asparagine glycosylation is present at asparagine 195. Residue aspartate 202 is the Charge relay system of the active site. Substrate is bound at residue aspartate 203. 4 residues coordinate Ca(2+): aspartate 211, aspartate 223, aspartate 228, and aspartate 230. The segment at 211-242 (DLAANYDPLASTDINDHDDDPTPQNNGDNKHG) is disordered. A substrate-binding site is contributed by 238 to 239 (DN). The active-site Charge relay system is the histidine 241. Ca(2+) contacts are provided by leucine 252, asparagine 255, glutamine 257, and glycine 259. 2 disulfides stabilise this stretch: cysteine 258–cysteine 407 and cysteine 350–cysteine 380. Substrate is bound by residues glutamate 283, 300–305 (SWGPED), aspartate 311, and 339–342 (ASGN). Aspartate 305 serves as a coordination point for Ca(2+). Position 348 (aspartate 348) interacts with Ca(2+). Aspartate 353 and tyrosine 355 together coordinate substrate. Glutamate 378 is a binding site for Ca(2+). The active-site Charge relay system is serine 415. Serine 415 provides a ligand contact to substrate. In terms of domain architecture, P/Homo B spans 491–629 (TVPEQHICTY…TLLLYGTADP (139 aa)). Cysteine 498 and cysteine 527 are oxidised to a cystine. Asparagine 519 is a glycosylation site (N-linked (GlcNAc...) asparagine). FU repeat units lie at residues 674–723 (NCHD…YYLD), 725–777 (DKCK…LVAD), and 804–850 (GKCD…STKS). Asparagine 868 carries N-linked (GlcNAc...) asparagine glycosylation. A helical transmembrane segment spans residues 872-892 (GFGLMFWIVVSLIAACGICAC). Residues 893 to 942 (KKCASETKSSNVEYAPLAQYNATNGAINLGAHTDDEDDDEDEVFVNPQIV) lie on the Cytoplasmic side of the membrane. Residues 922-942 (GAHTDDEDDDEDEVFVNPQIV) are disordered. The segment covering 926–935 (DDEDDDEDEV) has biased composition (acidic residues).

The protein belongs to the peptidase S8 family. Furin subfamily. The cofactor is Ca(2+). As to expression, in larvae and adults, expressed in all hypodermal cells, vulva and ventral nerve cords. In terms of tissue distribution, most highly expressed isoform in the embryonic epidermis. Expressed primarily in the germline. As to expression, expressed primarily in pharyngeal epithelial cells.

The protein resides in the membrane. In terms of biological role, serine endoprotease which cleaves proproteins at paired basic amino acids at the consensus RX(K/R)R motif. Involved in N-terminal processing of cuticle collagens and plays a role in cuticle biosynthesis. May cleave both sqt-3 and dpy-17 collagens to promote their secretion. Acts in ASEL sensory neurons to regulate high salt chemotaxis responses probably by cleaving insulin-like protein ins-6 into its mature and active form. Essential for embryonic and larval development. Involved in cuticle biosynthesis but dispensable for larval development. This Caenorhabditis elegans protein is Endoprotease bli-4 (bli-4).